Consider the following 103-residue polypeptide: Large ribosomal subunit protein bL21 (103 aa).

This sequence belongs to the bacterial ribosomal protein bL21 family. In terms of assembly, part of the 50S ribosomal subunit. Contacts protein L20.

Functionally, this protein binds to 23S rRNA in the presence of protein L20. The protein is Large ribosomal subunit protein bL21 of Haemophilus influenzae (strain PittEE).